A 312-amino-acid chain; its full sequence is D-alanine--D-alanine ligase (312 aa).

Positions 99–304 (KKILKAEGIP…FEDLVEKILM (206 aa)) constitute an ATP-grasp domain. 131–186 (LQTLKLPVVIKAPREGSTIGIEFVFSKQELPKAIKKVLEIDKQLLVEEFIEGVEVT) is a binding site for ATP. Mg(2+) is bound by residues D257, E271, and N273.

The protein belongs to the D-alanine--D-alanine ligase family. Mg(2+) serves as cofactor. The cofactor is Mn(2+).

It localises to the cytoplasm. The catalysed reaction is 2 D-alanine + ATP = D-alanyl-D-alanine + ADP + phosphate + H(+). Its pathway is cell wall biogenesis; peptidoglycan biosynthesis. Cell wall formation. This Carboxydothermus hydrogenoformans (strain ATCC BAA-161 / DSM 6008 / Z-2901) protein is D-alanine--D-alanine ligase.